The following is a 325-amino-acid chain: E3 ubiquitin-protein ligase EL5 (325 aa).

A disordered region spans residues 1–29 (MVRGVEQGGPAMDESSSSSSPSPVSAPAG). Positions 15-28 (SSSSSSPSPVSAPA) are enriched in low complexity. The helical transmembrane segment at 38–58 (IATVAAVLIVFAALTLAFVLL) threads the bilayer. The segment at 70–105 (TTTSTSGRGRRPRPRRRSGSGGDGGTGGGVDPEVLR) is disordered. A compositionally biased stretch (basic residues) spans 77–87 (RGRRPRPRRRS). Residues 88–99 (GSGGDGGTGGGV) show a composition bias toward gly residues. The segment at 134-176 (CAVCLAELEDGEEARFLPRCGHGFHAECVDMWLGSHSTCPLCR) adopts an RING-type; atypical zinc-finger fold. Disordered regions lie at residues 267 to 289 (GAAGSTSSCSCATGGDNDDGDVE) and 303 to 325 (AATPARPPEAEAGARTAAAHVRN). Positions 268 to 281 (AAGSTSSCSCATGG) are enriched in low complexity.

It localises to the cell membrane. It catalyses the reaction S-ubiquitinyl-[E2 ubiquitin-conjugating enzyme]-L-cysteine + [acceptor protein]-L-lysine = [E2 ubiquitin-conjugating enzyme]-L-cysteine + N(6)-ubiquitinyl-[acceptor protein]-L-lysine.. It participates in protein modification; protein ubiquitination. Functionally, functions as an E3 ubiquitin-protein ligase in cooperation with the E2 ubiquitin conjugating enzymes UBC5A and UBC5B. Involved in root development. Required for the maintenance of cell viability after the initiation of root primordial formation. May mediate the degradation of cytotoxic proteins produced in root cells after the actions of auxin, cytokinin and jasmonic acid. Mediates 'Lys-48'-linked polyubiquitination of MBP in vitro. This is E3 ubiquitin-protein ligase EL5 (EL5.1) from Oryza sativa subsp. japonica (Rice).